The chain runs to 250 residues: 5'/3'-nucleotidase SurE (250 aa).

Asp-8, Asp-9, Ser-39, and Asn-92 together coordinate a divalent metal cation.

This sequence belongs to the SurE nucleotidase family. The cofactor is a divalent metal cation.

The protein localises to the cytoplasm. It catalyses the reaction a ribonucleoside 5'-phosphate + H2O = a ribonucleoside + phosphate. The enzyme catalyses a ribonucleoside 3'-phosphate + H2O = a ribonucleoside + phosphate. It carries out the reaction [phosphate](n) + H2O = [phosphate](n-1) + phosphate + H(+). In terms of biological role, nucleotidase with a broad substrate specificity as it can dephosphorylate various ribo- and deoxyribonucleoside 5'-monophosphates and ribonucleoside 3'-monophosphates with highest affinity to 3'-AMP. Also hydrolyzes polyphosphate (exopolyphosphatase activity) with the preference for short-chain-length substrates (P20-25). Might be involved in the regulation of dNTP and NTP pools, and in the turnover of 3'-mononucleotides produced by numerous intracellular RNases (T1, T2, and F) during the degradation of various RNAs. The sequence is that of 5'/3'-nucleotidase SurE from Wigglesworthia glossinidia brevipalpis.